A 1020-amino-acid polypeptide reads, in one-letter code: Mastermind-like protein 1 (1020 aa).

The interval 1–97 (MVLPTCPMAE…PAPASAPAAA (97 aa)) is required for interaction with NOTCH proteins. Ser45 bears the Phosphoserine mark. The span at 67–76 (KAKRAGKHRQ) shows a compositional bias: basic residues. Positions 67 to 191 (KAKRAGKHRQ…TAGKHSLGLD (125 aa)) are disordered. A compositionally biased stretch (low complexity) spans 77-99 (PPAAATAPVAAPAPASAPAAARL). Over residues 100–122 (DAADGPEHGRPVAHLHDTVKRSL) the composition is skewed to basic and acidic residues. A compositionally biased stretch (polar residues) spans 124–133 (SAASPQNGDQ). A phosphoserine mark is found at Ser127, Ser310, Ser321, and Ser367. Disordered stretches follow at residues 335 to 522 (GASS…YGNT), 575 to 598 (PFRSLVPPGQEQNPSSVPVAAPAA), 663 to 686 (EKQQFQRHLTRPPPQYQDPTQSTF), 725 to 748 (SMGPGHAPVSSLPSSSGQQDRGVA), 794 to 866 (QNAS…NPFT), and 888 to 959 (AMPS…RPGL). Positions 344–369 (DSPSLGSSQTLFHTTSQPGVDNSSPN) are enriched in polar residues. Residues 373 to 383 (ASAQAQSAQRA) are compositionally biased toward low complexity. The segment covering 399–410 (ELSSAHQLQQIA) has biased composition (polar residues). Over residues 419–435 (LQNPQQAAPAPGPGQLA) the composition is skewed to low complexity. Polar residues predominate over residues 491–515 (PSHSNLLSHQSPSNLNQNPVNNQGS). Residues 588–598 (PSSVPVAAPAA) are compositionally biased toward low complexity. The segment covering 794-818 (QNASTSAAYGQNSLGSASLSQQHSK) has biased composition (polar residues). The residue at position 827 (Lys827) is an N6-acetyllysine. Positions 837-864 (MGSQNASWQHQGMPNLSSQTSGNSSVNP) are enriched in polar residues. Over residues 911–920 (SAQQRNSAPA) the composition is skewed to low complexity. At Ser1019 the chain carries Phosphoserine.

This sequence belongs to the mastermind family. In terms of assembly, interacts (via N-terminus) with NOTCH1, NOTCH2, NOTCH3 and NOTCH4 (via ankyrin repeat region). Interacts (via N-terminus) with p53 (via DNA-binding region). Forms a DNA-binding complex with Notch proteins and RBPSUH/RBP-J kappa/CBF1. Also binds CREBBP/CBP and CDK8. Forms a complex with PRAG1, NOTCH1 and MAML1, in a MAML1-dependent manner. As to expression, at E9.5, strongly expressed in the telencephalon, first branchial arch, forelimb buds and somites. By 10.5 dpc, continuously expressed in brain and spinal cord. Also expressed in first and second branchial arches and limb buds. By 11.5 dpc, expression in CNS is weak but increases in mesodermal tissues. At 14.5 dpc, detected in epithelial cells in trachea, esophagus and proximal and distal tubules of the developing lungs.

The protein localises to the nucleus speckle. Acts as a transcriptional coactivator for NOTCH proteins. Has been shown to amplify NOTCH-induced transcription of HES1. Enhances phosphorylation and proteolytic turnover of the NOTCH intracellular domain in the nucleus through interaction with CDK8. Binds to CREBBP/CBP which promotes nucleosome acetylation at NOTCH enhancers and activates transcription. Induces phosphorylation and localization of CREBBP to nuclear foci. Plays a role in hematopoietic development by regulating NOTCH-mediated lymphoid cell fate decisions. This Mus musculus (Mouse) protein is Mastermind-like protein 1.